A 278-amino-acid polypeptide reads, in one-letter code: Acetyl-coenzyme A carboxylase carboxyl transferase subunit beta (278 aa).

The CoA carboxyltransferase N-terminal domain maps to Leu-23–Lys-278. 4 residues coordinate Zn(2+): Cys-27, Cys-30, Cys-46, and Cys-49. A C4-type zinc finger spans residues Cys-27–Cys-49.

It belongs to the AccD/PCCB family. In terms of assembly, acetyl-CoA carboxylase is a heterohexamer composed of biotin carboxyl carrier protein (AccB), biotin carboxylase (AccC) and two subunits each of ACCase subunit alpha (AccA) and ACCase subunit beta (AccD). The cofactor is Zn(2+).

The protein localises to the cytoplasm. The catalysed reaction is N(6)-carboxybiotinyl-L-lysyl-[protein] + acetyl-CoA = N(6)-biotinyl-L-lysyl-[protein] + malonyl-CoA. The protein operates within lipid metabolism; malonyl-CoA biosynthesis; malonyl-CoA from acetyl-CoA: step 1/1. In terms of biological role, component of the acetyl coenzyme A carboxylase (ACC) complex. Biotin carboxylase (BC) catalyzes the carboxylation of biotin on its carrier protein (BCCP) and then the CO(2) group is transferred by the transcarboxylase to acetyl-CoA to form malonyl-CoA. This chain is Acetyl-coenzyme A carboxylase carboxyl transferase subunit beta, found in Chlorobaculum tepidum (strain ATCC 49652 / DSM 12025 / NBRC 103806 / TLS) (Chlorobium tepidum).